The following is a 503-amino-acid chain: Ribose import ATP-binding protein RbsA 1 (503 aa).

ABC transporter domains follow at residues 5–241 and 253–495; these read IALE…VGRA and IGQP…AGIE. 37–44 is an ATP binding site; sequence GENGAGKS.

It belongs to the ABC transporter superfamily. Ribose importer (TC 3.A.1.2.1) family. In terms of assembly, the complex is composed of an ATP-binding protein (RbsA), two transmembrane proteins (RbsC) and a solute-binding protein (RbsB).

The protein localises to the cell inner membrane. It catalyses the reaction D-ribose(out) + ATP + H2O = D-ribose(in) + ADP + phosphate + H(+). In terms of biological role, part of the ABC transporter complex RbsABC involved in ribose import. Responsible for energy coupling to the transport system. The polypeptide is Ribose import ATP-binding protein RbsA 1 (Rhizobium meliloti (strain 1021) (Ensifer meliloti)).